The chain runs to 131 residues: Small ribosomal subunit protein uS11 (131 aa).

Belongs to the universal ribosomal protein uS11 family. In terms of assembly, part of the 30S ribosomal subunit. Interacts with proteins S7 and S18. Binds to IF-3.

Functionally, located on the platform of the 30S subunit, it bridges several disparate RNA helices of the 16S rRNA. Forms part of the Shine-Dalgarno cleft in the 70S ribosome. This chain is Small ribosomal subunit protein uS11, found in Wolinella succinogenes (strain ATCC 29543 / DSM 1740 / CCUG 13145 / JCM 31913 / LMG 7466 / NCTC 11488 / FDC 602W) (Vibrio succinogenes).